Here is a 130-residue protein sequence, read N- to C-terminus: Protein ApaG (130 aa).

Positions 3–127 (RALTRDIEVT…FSLDTPDLRR (125 aa)) constitute an ApaG domain.

This chain is Protein ApaG, found in Allorhizobium ampelinum (strain ATCC BAA-846 / DSM 112012 / S4) (Agrobacterium vitis (strain S4)).